A 392-amino-acid chain; its full sequence is Glutamate 5-kinase (392 aa).

Lys17 is a binding site for ATP. Positions 57, 144, and 156 each coordinate substrate. 176–177 (SD) contacts ATP. The PUA domain occupies 282-359 (AGILSVDAGA…AEIEALLGYA (78 aa)). Residues 373 to 392 (TEQTGRKAGKSTKKKDEAHA) form a disordered region.

It belongs to the glutamate 5-kinase family.

It localises to the cytoplasm. It carries out the reaction L-glutamate + ATP = L-glutamyl 5-phosphate + ADP. Its pathway is amino-acid biosynthesis; L-proline biosynthesis; L-glutamate 5-semialdehyde from L-glutamate: step 1/2. Catalyzes the transfer of a phosphate group to glutamate to form L-glutamate 5-phosphate. In Allorhizobium ampelinum (strain ATCC BAA-846 / DSM 112012 / S4) (Agrobacterium vitis (strain S4)), this protein is Glutamate 5-kinase.